The primary structure comprises 333 residues: DNA-directed RNA polymerase subunit alpha (333 aa).

The segment at 1-234 is alpha N-terminal domain (alpha-NTD); the sequence is MQISVNEFLT…QQLAAFVDLK (234 aa). An alpha C-terminal domain (alpha-CTD) region spans residues 248–333; the sequence is IDPILLRPVD…SLKKDDKATA (86 aa).

This sequence belongs to the RNA polymerase alpha chain family. As to quaternary structure, homodimer. The RNAP catalytic core consists of 2 alpha, 1 beta, 1 beta' and 1 omega subunit. When a sigma factor is associated with the core the holoenzyme is formed, which can initiate transcription.

It catalyses the reaction RNA(n) + a ribonucleoside 5'-triphosphate = RNA(n+1) + diphosphate. Its function is as follows. DNA-dependent RNA polymerase catalyzes the transcription of DNA into RNA using the four ribonucleoside triphosphates as substrates. The polypeptide is DNA-directed RNA polymerase subunit alpha (Pseudomonas syringae pv. tomato (strain ATCC BAA-871 / DC3000)).